Here is a 135-residue protein sequence, read N- to C-terminus: MNTMNVNIVTPNGSVYNQDNVEITVLQTVGGDMGVMYGHIPTVTAIHTGYVKVHYTDGIDYIAVSDGFVEIRQEKTSIIVQTAEKAEDIDVRRAESAKERAESHLNNNDEDTDINRAKRALERAENRLKVSDLLK.

Basic and acidic residues predominate over residues 90-103; sequence DVRRAESAKERAES. Residues 90–115 are disordered; sequence DVRRAESAKERAESHLNNNDEDTDIN.

Belongs to the ATPase epsilon chain family. In terms of assembly, F-type ATPases have 2 components, CF(1) - the catalytic core - and CF(0) - the membrane proton channel. CF(1) has five subunits: alpha(3), beta(3), gamma(1), delta(1), epsilon(1). CF(0) has three main subunits: a, b and c.

It is found in the cell membrane. Its function is as follows. Produces ATP from ADP in the presence of a proton gradient across the membrane. The protein is ATP synthase epsilon chain of Staphylococcus carnosus (strain TM300).